The following is a 1042-amino-acid chain: Isoleucine--tRNA ligase (1042 aa).

Positions 59 to 69 (PFANGLPHYGH) match the 'HIGH' region motif. The 'KMSKS' region signature appears at 619-623 (KMSKS). Lys-622 serves as a coordination point for ATP.

It belongs to the class-I aminoacyl-tRNA synthetase family. IleS type 2 subfamily. As to quaternary structure, monomer. Zn(2+) serves as cofactor.

It localises to the cytoplasm. It carries out the reaction tRNA(Ile) + L-isoleucine + ATP = L-isoleucyl-tRNA(Ile) + AMP + diphosphate. Its function is as follows. Catalyzes the attachment of isoleucine to tRNA(Ile). As IleRS can inadvertently accommodate and process structurally similar amino acids such as valine, to avoid such errors it has two additional distinct tRNA(Ile)-dependent editing activities. One activity is designated as 'pretransfer' editing and involves the hydrolysis of activated Val-AMP. The other activity is designated 'posttransfer' editing and involves deacylation of mischarged Val-tRNA(Ile). The sequence is that of Isoleucine--tRNA ligase from Nocardia farcinica (strain IFM 10152).